The primary structure comprises 469 residues: 3-isopropylmalate dehydratase large subunit (469 aa).

Residues C350, C410, and C413 each coordinate [4Fe-4S] cluster.

This sequence belongs to the aconitase/IPM isomerase family. LeuC type 1 subfamily. In terms of assembly, heterodimer of LeuC and LeuD. Requires [4Fe-4S] cluster as cofactor.

It carries out the reaction (2R,3S)-3-isopropylmalate = (2S)-2-isopropylmalate. Its pathway is amino-acid biosynthesis; L-leucine biosynthesis; L-leucine from 3-methyl-2-oxobutanoate: step 2/4. In terms of biological role, catalyzes the isomerization between 2-isopropylmalate and 3-isopropylmalate, via the formation of 2-isopropylmaleate. This chain is 3-isopropylmalate dehydratase large subunit, found in Rhizobium etli (strain CIAT 652).